The chain runs to 256 residues: Rano class II histocompatibility antigen, B alpha chain (256 aa).

An N-terminal signal peptide occupies residues 1–23 (MPLSRALILGVLALTTMLSPCGG). Residues 24–111 (QDDIEADHVG…KRSNSTPAVN (88 aa)) form an alpha-1 region. The Extracellular segment spans residues 24–218 (QDDIEADHVG…IPAPMSELTE (195 aa)). The Ig-like C1-type domain occupies 108–206 (PAVNEVPEAT…LDEPVLRHWE (99 aa)). Residues 112–205 (EVPEATVFSK…SLDEPVLRHW (94 aa)) form an alpha-2 region. The cysteines at positions 134 and 190 are disulfide-linked. The N-linked (GlcNAc...) asparagine glycan is linked to Asn-145. The tract at residues 206–218 (EPEIPAPMSELTE) is connecting peptide. The chain crosses the membrane as a helical span at residues 219–244 (TVVCALGLSVGLVGIVVGTIFIIQGL). Topologically, residues 245-256 (RSVAPSRHPGPL) are cytoplasmic.

The protein belongs to the MHC class II family.

The protein resides in the membrane. The chain is Rano class II histocompatibility antigen, B alpha chain (RT1-Ba) from Rattus norvegicus (Rat).